The primary structure comprises 691 residues: Glycine--tRNA ligase beta subunit (691 aa).

The protein belongs to the class-II aminoacyl-tRNA synthetase family. In terms of assembly, tetramer of two alpha and two beta subunits.

Its subcellular location is the cytoplasm. It catalyses the reaction tRNA(Gly) + glycine + ATP = glycyl-tRNA(Gly) + AMP + diphosphate. This Levilactobacillus brevis (strain ATCC 367 / BCRC 12310 / CIP 105137 / JCM 1170 / LMG 11437 / NCIMB 947 / NCTC 947) (Lactobacillus brevis) protein is Glycine--tRNA ligase beta subunit.